The chain runs to 446 residues: Long-chain fatty acid transport protein (446 aa).

A signal peptide spans 1–25 (MSQKTLFTKSALAVAVALISTQAWS).

Belongs to the OmpP1/FadL family. Has been isolated from outer membrane preparation as a homodimer.

Its subcellular location is the cell outer membrane. In terms of biological role, involved in translocation of long-chain fatty acids across the outer membrane. It is a receptor for the bacteriophage T2. FadL may form a specific channel. This Escherichia coli (strain K12) protein is Long-chain fatty acid transport protein (fadL).